The chain runs to 162 residues: Interleukin-15 (162 aa).

The N-terminal stretch at 1–29 (MRILKPYLRSTSIQCYLCLLLNSHFLTEA) is a signal peptide. Positions 30–48 (GIHVFILGCISASLPKTEA) are excised as a propeptide. Disulfide bonds link C83–C133 and C90–C136. N-linked (GlcNAc...) asparagine glycans are attached at residues N104, N113, N121, and N127.

It belongs to the IL-15/IL-21 family.

It is found in the secreted. Cytokine that plays a major role in the development of inflammatory and protective immune responses to microbial invaders and parasites by modulating immune cells of both the innate and adaptive immune systems. Stimulates the proliferation of natural killer cells, T-cells and B-cells and promotes the secretion of several cytokines. In monocytes, induces the production of IL8 and monocyte chemotactic protein 1/CCL2, two chemokines that attract neutrophils and monocytes respectively to sites of infection. Unlike most cytokines, which are secreted in soluble form, IL15 is expressed in association with its high affinity IL15RA on the surface of IL15-producing cells and delivers signals to target cells that express IL2RB and IL2RG receptor subunits. Binding to its receptor triggers the phosphorylation of JAK1 and JAK3 and the recruitment and subsequent phosphorylation of signal transducer and activator of transcription-3/STAT3 and STAT5. In mast cells, induces the rapid tyrosine phosphorylation of STAT6 and thereby controls mast cell survival and release of cytokines such as IL4. The protein is Interleukin-15 (IL15) of Bos taurus (Bovine).